Consider the following 301-residue polypeptide: Cytosolic sulfotransferase 3 (301 aa).

Residue 53–58 participates in 3'-phosphoadenylyl sulfate binding; that stretch reads KAGTTW. His-115 (proton acceptor) is an active-site residue. 3'-phosphoadenylyl sulfate is bound by residues Arg-137, Ser-145, Tyr-201, 235 to 240, and 263 to 265; these read VQFDAM and RKG.

It belongs to the sulfotransferase 1 family.

It localises to the cytoplasm. Inhibited by Hg(2+), Co(2+), Zn(2+), Cd(2+), Cu(2+) and Pb(2+) ions. Activated slightly by Mn(2+), Ca(2+) and Mg(2+) ions. Functionally, sulfotransferase that utilizes 3'-phospho-5'-adenylyl sulfate (PAPS) as sulfonate donor to catalyze the sulfate conjugation of a variety of xenobiotic and endogenous compounds, including dopamine, T3 (triiodo-L-thyronine), T4 (thyroxine), estrone, DHEA (dehydroepiandrosterone), flavonoids, isoflavonoids and other phenolic compounds. This chain is Cytosolic sulfotransferase 3, found in Danio rerio (Zebrafish).